Here is a 592-residue protein sequence, read N- to C-terminus: Aspartate--tRNA(Asp/Asn) ligase (592 aa).

Residue E175 coordinates L-aspartate. The aspartate stretch occupies residues 199 to 202 (QLFK). R221 serves as a coordination point for L-aspartate. ATP contacts are provided by residues 221–223 (RDE) and Q230. An L-aspartate-binding site is contributed by H450. ATP is bound at residue E483. R490 provides a ligand contact to L-aspartate. 535-538 (GLDR) lines the ATP pocket.

The protein belongs to the class-II aminoacyl-tRNA synthetase family. Type 1 subfamily. As to quaternary structure, homodimer.

It localises to the cytoplasm. The catalysed reaction is tRNA(Asx) + L-aspartate + ATP = L-aspartyl-tRNA(Asx) + AMP + diphosphate. Its function is as follows. Aspartyl-tRNA synthetase with relaxed tRNA specificity since it is able to aspartylate not only its cognate tRNA(Asp) but also tRNA(Asn). Reaction proceeds in two steps: L-aspartate is first activated by ATP to form Asp-AMP and then transferred to the acceptor end of tRNA(Asp/Asn). The chain is Aspartate--tRNA(Asp/Asn) ligase from Acinetobacter baumannii (strain ATCC 17978 / DSM 105126 / CIP 53.77 / LMG 1025 / NCDC KC755 / 5377).